We begin with the raw amino-acid sequence, 276 residues long: Type II pantothenate kinase (276 aa).

8–15 (DAGGTLTK) is an ATP binding site. The active-site Proton acceptor is the Glu76. Residues Thr105, 127 to 131 (GGTIM), Phe143, and Ser230 each bind ATP.

It belongs to the type II pantothenate kinase family. As to quaternary structure, homodimer.

The protein resides in the cytoplasm. The catalysed reaction is (R)-pantothenate + ATP = (R)-4'-phosphopantothenate + ADP + H(+). It participates in cofactor biosynthesis; coenzyme A biosynthesis; CoA from (R)-pantothenate: step 1/5. Functionally, catalyzes the phosphorylation of pantothenate (Pan), the first step in CoA biosynthesis. This Bacillus cereus (strain AH820) protein is Type II pantothenate kinase.